A 285-amino-acid chain; its full sequence is tRNA pseudouridine synthase B (285 aa).

Catalysis depends on Asp40, which acts as the Nucleophile.

It belongs to the pseudouridine synthase TruB family. Type 1 subfamily.

It carries out the reaction uridine(55) in tRNA = pseudouridine(55) in tRNA. Responsible for synthesis of pseudouridine from uracil-55 in the psi GC loop of transfer RNAs. This Caldanaerobacter subterraneus subsp. tengcongensis (strain DSM 15242 / JCM 11007 / NBRC 100824 / MB4) (Thermoanaerobacter tengcongensis) protein is tRNA pseudouridine synthase B.